A 29-amino-acid polypeptide reads, in one-letter code: Snake venom metalloproteinase bothrolysin (29 aa).

Residues 6-29 enclose the Peptidase M12B domain; that stretch reads RYIELFLVVDSGMFMKYNGNSDKI. Ca(2+) is bound at residue Glu-9.

The protein belongs to the venom metalloproteinase (M12B) family. Zn(2+) is required as a cofactor. As to expression, expressed by the venom gland.

The protein resides in the secreted. The enzyme catalyses Cleavage of 4-Gln-|-His-5, 9-Ser-|-His-10 and 14-Ala-|-Leu-15 of insulin B chain and Pro-|-Phe of angiotensin I.. Functionally, snake venom zinc metalloproteinase that impairs hemostasis in the envenomed animal. In Bothrops jararaca (Jararaca), this protein is Snake venom metalloproteinase bothrolysin.